Here is a 721-residue protein sequence, read N- to C-terminus: Xylosyl- and glucuronyltransferase LARGE2 (721 aa).

Over 1 to 8 the chain is Cytoplasmic; the sequence is MLPRGRPR. The chain crosses the membrane as a helical; Signal-anchor for type II membrane protein span at residues 9–29; sequence ALGAAALLLLLLLLGFLLFGG. Residues 30-721 lie on the Lumenal side of the membrane; that stretch reads DLGCERREPG…LQQPQSPARG (692 aa). The interval 59-89 is disordered; the sequence is DGRLRRAAALDGDPGAGPGDHNRSDCGPQPP. Asn80 and Asn107 each carry an N-linked (GlcNAc...) asparagine glycan. Residues 97–372 form a xylosyltransferase activity region; that stretch reads LHVAIVCAGH…FLEYDGNLLR (276 aa). Mn(2+) is bound by residues Asp201 and Asp203. Asn231 is a glycosylation site (N-linked (GlcNAc...) asparagine). A glucuronyltransferase activity region spans residues 373–715; it reads RELFVCPSQP…LKYLPALQQP (343 aa). The Mn(2+) site is built by Asp521 and Asp523.

The protein in the C-terminal section; belongs to the glycosyltransferase 49 family. In the N-terminal section; belongs to the glycosyltransferase 8 family. In terms of assembly, interacts with B4GAT1. Mn(2+) is required as a cofactor. Widely expressed. Expressed at high level in placenta, pancreas and kidney compared to LARGE. Not expressed in brain.

It is found in the golgi apparatus membrane. It carries out the reaction 3-O-[beta-D-GlcA-(1-&gt;3)-beta-D-Xyl-(1-&gt;4)-Rib-ol-P-Rib-ol-P-3-beta-D-GalNAc-(1-&gt;3)-beta-D-GlcNAc-(1-&gt;4)-(O-6-P-alpha-D-Man)]-Thr-[protein] + UDP-alpha-D-xylose = 3-O-[alpha-D-Xyl-(1-&gt;3)-beta-D-GlcA-(1-&gt;4)-beta-D-Xyl-(1-&gt;4)-Rib-ol-P-Rib-ol-P-3-beta-D-GalNAc-(1-&gt;3)-beta-D-GlcNAc-(1-&gt;4)-(O-6-P-alpha-D-Man)]-Thr-[protein] + UDP + H(+). It catalyses the reaction 3-O-{(1-&gt;[3)-alpha-D-Xyl-(1-&gt;3)-beta-D-GlcA-(1-&gt;](n)-4)-beta-D-Xyl-(1-&gt;4)-Rib-ol-P-Rib-ol-P-3-beta-D-GalNAc-(1-&gt;3)-beta-D-GlcNAc-(1-&gt;4)-O-6-P-alpha-D-Man}-L-Thr-[protein] + UDP-alpha-D-glucuronate = 3-O-{beta-D-GlcA-(1-&gt;[3)-alpha-D-Xyl-(1-&gt;3)-beta-D-GlcA-(1-&gt;](n)-4)-beta-D-Xyl-(1-&gt;4)-Rib-ol-P-Rib-ol-P-3-beta-D-GalNAc-(1-&gt;3)-beta-D-GlcNAc-(1-&gt;4)-O-6-P-alpha-D-Man}-L-Thr-[protein] + UDP + H(+). The catalysed reaction is 3-O-{beta-D-GlcA-(1-&gt;[3)-alpha-D-Xyl-(1-&gt;3)-beta-D-GlcA-(1-&gt;](n)-4)-beta-D-Xyl-(1-&gt;4)-Rib-ol-P-Rib-ol-P-3-beta-D-GalNAc-(1-&gt;3)-beta-D-GlcNAc-(1-&gt;4)-O-6-P-alpha-D-Man}-L-Thr-[protein] + UDP-alpha-D-xylose = 3-O-{(1-&gt;[3)-alpha-D-Xyl-(1-&gt;3)-beta-D-GlcA-(1-&gt;](n+1)-4)-beta-D-Xyl-(1-&gt;4)-Rib-ol-P-Rib-ol-P-3-beta-D-GalNAc-(1-&gt;3)-beta-D-GlcNAc-(1-&gt;4)-O-6-P-alpha-D-Man}-L-Thr-[protein] + UDP + H(+). It participates in protein modification; protein glycosylation. In terms of biological role, bifunctional glycosyltransferase with both alpha-1,3-xylosyltransferase and beta-1,3-glucuronyltransferase activities involved in the maturation of alpha-dystroglycan (DAG1) by glycosylation leading to DAG1 binding to laminin G-like domain-containing extracellular proteins with high affinity and in a phosphorylated-O-mannosyl trisaccharide dependent manner. Elongates the glucuronyl-beta-1,4-xylose-beta disaccharide primer structure by adding repeating units [-3-Xylose-alpha-1,3-GlcA-beta-1-] to produce a heteropolysaccharide. Supports the maturation of DAG1 more effectively than LARGE1. In addition, can modify both heparan sulfate (HS)- and chondroitin/dermatan sulfate (CS/DS)-proteoglycans (PGs), namely GPC4, with a glycosaminoglycan (GAG)-like polysaccharide composed of xylose and glucuronic acid to confer laminin binding. In Homo sapiens (Human), this protein is Xylosyl- and glucuronyltransferase LARGE2.